The primary structure comprises 1089 residues: Platelet-derived growth factor receptor alpha (1089 aa).

Residues methionine 1–glutamine 24 form the signal peptide. Ig-like C2-type domains lie at leucine 25–glutamate 113, isoleucine 117–serine 201, glutamate 202–threonine 306, proline 319–serine 410, and proline 414–valine 517. Over leucine 25–alanine 528 the chain is Extracellular. 5 N-linked (GlcNAc...) asparagine glycosylation sites follow: asparagine 42, asparagine 76, asparagine 89, asparagine 103, and asparagine 179. An intrachain disulfide couples cysteine 49 to cysteine 100. Disulfide bonds link cysteine 150/cysteine 189 and cysteine 235/cysteine 290. Residues asparagine 353, asparagine 359, asparagine 458, asparagine 468, and asparagine 506 are each glycosylated (N-linked (GlcNAc...) asparagine). A disulfide bridge links cysteine 435 with cysteine 501. Residues alanine 529–tryptophan 549 traverse the membrane as a helical segment. At lysine 550–leucine 1089 the chain is on the cytoplasmic side. Phosphotyrosine; by autocatalysis is present on residues tyrosine 572 and tyrosine 574. Residues leucine 593–leucine 954 form the Protein kinase domain. Residues leucine 599–valine 607 and lysine 627 each bind ATP. A phosphotyrosine; by autocatalysis mark is found at tyrosine 720, tyrosine 731, tyrosine 742, tyrosine 754, tyrosine 762, and tyrosine 768. Residue aspartate 818 is the Proton acceptor of the active site. Tyrosine 849, tyrosine 988, and tyrosine 1018 each carry phosphotyrosine; by autocatalysis. A disordered region spans residues tyrosine 1018–leucine 1089. Positions serine 1041 to phenylalanine 1059 are enriched in polar residues. Residues glutamate 1065–leucine 1089 show a composition bias toward acidic residues.

The protein belongs to the protein kinase superfamily. Tyr protein kinase family. CSF-1/PDGF receptor subfamily. Interacts with homodimeric PDGFA, PDGFB and PDGFC, and with heterodimers formed by PDGFA and PDGFB. Monomer in the absence of bound ligand. Interaction with dimeric PDGFA, PDGFB and/or PDGFC leads to receptor dimerization, where both PDGFRA homodimers and heterodimers with PDGFRB are observed. Interacts (tyrosine phosphorylated) with SHB (via SH2 domain). Interacts (tyrosine phosphorylated) with SHF (via SH2 domain). Interacts (tyrosine phosphorylated) with SRC (via SH2 domain). Interacts (tyrosine phosphorylated) with PIK3R1. Interacts (tyrosine phosphorylated) with PLCG1 (via SH2 domain). Interacts (tyrosine phosphorylated) with CRK, GRB2 and GRB7. Interacts with CD248; this interaction promotes PDGF receptor signaling pathway. In terms of processing, ubiquitinated, leading to its internalization and degradation. Post-translationally, autophosphorylated on tyrosine residues upon ligand binding. Autophosphorylation occurs in trans, i.e. one subunit of the dimeric receptor phosphorylates tyrosine residues on the other subunit. Phosphorylation at Tyr-731 and Tyr-742 is important for interaction with PIK3R1. Phosphorylation at Tyr-720 and Tyr-754 is important for interaction with PTPN11. Phosphorylation at Tyr-762 is important for interaction with CRK. Phosphorylation at Tyr-572 and Tyr-574 is important for interaction with SRC and SRC family members. Phosphorylation at Tyr-988 and Tyr-1018 is important for interaction with PLCG1. As to expression, focally expressed in cortical interstitial cells and highly expressed in the interstitium of the papillary region. Also expressed by adventitial cells in arterial vessels. Up-regulated in areas of renal fibrosis. In mice with unilateral ureteral obstruction, expression in cortical interstitial cells becomes prominent at day 4 which increases progressively until day 14.

It localises to the cell membrane. It is found in the cell projection. Its subcellular location is the cilium. The protein resides in the golgi apparatus. It carries out the reaction L-tyrosyl-[protein] + ATP = O-phospho-L-tyrosyl-[protein] + ADP + H(+). Its activity is regulated as follows. Present in an inactive conformation in the absence of bound ligand. Binding of PDGFA and/or PDGFB leads to dimerization and activation by autophosphorylation on tyrosine residues. Inhibited by imatinib, nilotinib and sorafenib. In terms of biological role, tyrosine-protein kinase that acts as a cell-surface receptor for PDGFA, PDGFB and PDGFC and plays an essential role in the regulation of embryonic development, cell proliferation, survival and chemotaxis. Depending on the context, promotes or inhibits cell proliferation and cell migration. Plays an important role in the differentiation of bone marrow-derived mesenchymal stem cells. Required for normal skeleton development and cephalic closure during embryonic development. Required for normal development of the mucosa lining the gastrointestinal tract, and for recruitment of mesenchymal cells and normal development of intestinal villi. Plays a role in cell migration and chemotaxis in wound healing. Plays a role in platelet activation, secretion of agonists from platelet granules, and in thrombin-induced platelet aggregation. Binding of its cognate ligands - homodimeric PDGFA, homodimeric PDGFB, heterodimers formed by PDGFA and PDGFB or homodimeric PDGFC -leads to the activation of several signaling cascades; the response depends on the nature of the bound ligand and is modulated by the formation of heterodimers between PDGFRA and PDGFRB. Phosphorylates PIK3R1, PLCG1, and PTPN11. Activation of PLCG1 leads to the production of the cellular signaling molecules diacylglycerol and inositol 1,4,5-trisphosphate, mobilization of cytosolic Ca(2+) and the activation of protein kinase C. Phosphorylates PIK3R1, the regulatory subunit of phosphatidylinositol 3-kinase, and thereby mediates activation of the AKT1 signaling pathway. Mediates activation of HRAS and of the MAP kinases MAPK1/ERK2 and/or MAPK3/ERK1. Promotes activation of STAT family members STAT1, STAT3 and STAT5A and/or STAT5B. Receptor signaling is down-regulated by protein phosphatases that dephosphorylate the receptor and its down-stream effectors, and by rapid internalization of the activated receptor. This is Platelet-derived growth factor receptor alpha (Pdgfra) from Mus musculus (Mouse).